The chain runs to 240 residues: Sugar fermentation stimulation protein homolog (240 aa).

It belongs to the SfsA family.

This chain is Sugar fermentation stimulation protein homolog, found in Saccharolobus solfataricus (strain ATCC 35092 / DSM 1617 / JCM 11322 / P2) (Sulfolobus solfataricus).